We begin with the raw amino-acid sequence, 98 residues long: NADH-ubiquinone oxidoreductase chain 4L (98 aa).

3 helical membrane-spanning segments follow: residues 1 to 21 (MTTMFLNLLLAFTVALVGVFI), 29 to 49 (TLLCLEGMMLSIFIMVALILL), and 59 to 79 (LPLILLVFSACEAGVGLALLV).

This sequence belongs to the complex I subunit 4L family. Core subunit of respiratory chain NADH dehydrogenase (Complex I) which is composed of 45 different subunits.

Its subcellular location is the mitochondrion inner membrane. The enzyme catalyses a ubiquinone + NADH + 5 H(+)(in) = a ubiquinol + NAD(+) + 4 H(+)(out). In terms of biological role, core subunit of the mitochondrial membrane respiratory chain NADH dehydrogenase (Complex I) which catalyzes electron transfer from NADH through the respiratory chain, using ubiquinone as an electron acceptor. Part of the enzyme membrane arm which is embedded in the lipid bilayer and involved in proton translocation. This Ornithorhynchus anatinus (Duckbill platypus) protein is NADH-ubiquinone oxidoreductase chain 4L (MT-ND4L).